A 104-amino-acid chain; its full sequence is L-rhamnose mutarotase (104 aa).

Y18 serves as a coordination point for substrate. Residue H22 is the Proton donor of the active site. Substrate-binding positions include Y41 and 76 to 77 (WW).

Belongs to the rhamnose mutarotase family. Homodimer.

It localises to the cytoplasm. The catalysed reaction is alpha-L-rhamnose = beta-L-rhamnose. The protein operates within carbohydrate metabolism; L-rhamnose metabolism. Its function is as follows. Involved in the anomeric conversion of L-rhamnose. The protein is L-rhamnose mutarotase of Tolumonas auensis (strain DSM 9187 / NBRC 110442 / TA 4).